A 2346-amino-acid polypeptide reads, in one-letter code: Myomegalin (2346 aa).

Coiled coils occupy residues 41-132 (REDI…LVEA), 162-205 (DQYT…LLEE), 238-318 (DSHL…REML), and 350-684 (CSQL…RQYL). At glutamate 252 the chain carries Phosphoserine. Residues 698–732 (NQQAEVTPTGRLGKQTDQGSMQIPSRDDSTSLTAK) form a disordered region. Position 704 is a phosphothreonine (threonine 704). The segment covering 722–732 (SRDDSTSLTAK) has biased composition (basic and acidic residues). Coiled-coil stretches lie at residues 743 to 936 (GDLD…TLAA), 1002 to 1043 (LQEE…SSVS), 1096 to 1124 (SSLQAEFRKLQGKLKNAHNIINLLKEQLV), 1212 to 1240 (STQHLRSQLSQCKQRYQDLQEKLLLSEAT), 1346 to 1385 (GKSENILVLRKDIKDLKAQLQNANKVIQNLKSRVRSLSVT), and 1431 to 1455 (GLQAKKDLESLIQRVSQLEAQLPKN). A disordered region spans residues 1193–1214 (DNQSQPRDPGPQSAFSLPGSTQ). Residues 1205–1214 (SAFSLPGSTQ) are compositionally biased toward polar residues. Residues 1551–1642 (KDHKSEKDQA…EEKKASPSHS (92 aa)) enclose the Olduvai domain. Low complexity predominate over residues 1591 to 1600 (SLTPSSSHAL). Disordered regions lie at residues 1591 to 1614 (SLTPSSSHALSDSHRSPSSTSFLS) and 1633 to 1690 (EEKK…EANQ). Positions 1652-1690 (AVLSSKPSSTSASQGAKAESNSNPISLPTPQNTPKEANQ) are enriched in polar residues. Coiled-coil stretches lie at residues 1736-1760 (VVSLAEAQQELQMLQKQLGESASTV) and 1840-2077 (GADL…QQLE). Disordered stretches follow at residues 2081–2103 (GKASLSPSSINQNFPASTDPGNK) and 2127–2156 (VFPSSASSTPGSETPIINRANGLGLDTSPV). The span at 2085–2103 (LSPSSINQNFPASTDPGNK) shows a compositional bias: polar residues. Positions 2273–2312 (ESTERELLELRTKVSKQERLLQSTTEHLKNANQQKESMEQ) form a coiled coil.

As to quaternary structure, interacts with PDE4D. Isoform 13 interacts with MAPRE1 and MAPRE3. Isoform 13 forms a pericentrosomal complex with AKAP9, CDK5RAP2 and EB1/MAPRE1; within this complex, may mediate MAPRE1-binding to CDK5RAP2. Interaction of isoform 13 with AKAP9 stabilizes both proteins. Isoform 13 interacts (via N-terminus) with CAMSAP2; this interaction is much stronger in the presence of AKAP9. In complex with AKAP9, Isoform 13 recruits CAMSAP2 to the Golgi apparatus. Isoform 13 interacts with unglycosylated LGALS3BP; this interaction may connect the pericentrosomal complex to the gamma-tubulin ring complex (gamma-TuRC) to promote microtubule assembly and acetylation. In terms of tissue distribution, highly expressed in adult and fetal heart, in skeletal muscle and, to a lower extent, in brain and placenta.

It is found in the golgi apparatus. It localises to the cytoplasm. The protein resides in the cytoskeleton. The protein localises to the microtubule organizing center. Its subcellular location is the centrosome. Functionally, functions as an anchor sequestering components of the cAMP-dependent pathway to Golgi and/or centrosomes. In terms of biological role, participates in microtubule dynamics, promoting microtubule assembly. Depending upon the cell context, may act at the level of the Golgi apparatus or that of the centrosome. In complex with AKAP9, recruits CAMSAP2 to the Golgi apparatus and tethers non-centrosomal minus-end microtubules to the Golgi, an important step for polarized cell movement. In complex with AKAP9, EB1/MAPRE1 and CDK5RAP2, contributes to microtubules nucleation and extension from the centrosome to the cell periphery, a crucial process for directed cell migration, mitotic spindle orientation and cell-cycle progression. The sequence is that of Myomegalin (PDE4DIP) from Homo sapiens (Human).